Reading from the N-terminus, the 1091-residue chain is MSRHEKTKSTGGGLLDSLFGRPSKSKGGTISSGTLAHGGRPVSADNYVVPGVEDFEQYIQQLSVAELDAKFLEIIEDMNIPKDKREPLLAKSKEERQKMIMWHLKGKNSLERSANSRFEKPIDYVEYLQNGEHSTHKVYQCVESLRVALTSNPISWIKEFGVAGIGTIEKLLARSKNNASYEKIEFEAIRCLKAIMNNTWGLNVVLNPDQHSVVLLLAQSLDPRKPQTMCEALKLLASFCIVYERNGYEKVLRAITTIAATSFKASERFRPIVDALFASDQQDPKRDLACHSLIFINTLTNTPTDLNFRLHLRCEIMRMGLYDRLDEFTKIVEASNNENLQQHFKIFNEIREDDFEEFVQRFDNVTFNMDDATDCFDVLKNLVTDTTSEPYFLSILQHLLYIRDDFYFRPAYYQLIEECISQIVFHKGYCDPNFENRNFNIDTSLLLDDIVEKAKAKESKRSEEYEKKIEQLESAKQEAEAKAAHLEEKVKLMEANGVAAPSPNKLPKVNIPMPPPPPGGGGAPPPPPPPMPGRAGGGPPPPPPPPMPGRAGGPPPPPPPPGMGGPPPPPMPGMMRPGGGPPPPPMMMGPMVPVLPHGLKPKKKWDVKNPMKRANWKAIVPAKMSDKAFWVKCQEDKLAQDDFLAELAVKFSSKPVKKEQKDAVDKPTTLTKKNVDLRVLDSKTAQNLAIMLGGSLKHLSYEQIKICLLRCDTDILSSNILQQLIQYLPPPEHLKRLQEIKAKGEPLPPIEQFAATIGEIKRLSPRLHNLNFKLTYADMVQDIKPDIVAGTAACEEIRNSKKFSKILELILLLGNYMNSGSKNEAAFGFEISYLTKLSNTKDADNKQTLLHYLADLVEKKFPDALNFYDDLSHVNKASRVNMDAIQKAMRQMNSAVKNLETDLQNNKVPQCDDDKFSEVMGKFAEECRQQVDVLGKMQLQMEKLYKDLSEYYAFDPSKYTMEEFFADIKTFKDAFQAAHNDNVRVREELEKKRRLQEAREQSAREQQERQQRKKAVVDMDAPQTQEGVMDSLLEALQTGSAFGQRNRQARRQRPAGAERRAQLSRSRSRTRVTNGQLMTREMILNEVLGSA.

Positions 1 to 37 are disordered; the sequence is MSRHEKTKSTGGGLLDSLFGRPSKSKGGTISSGTLAH. Residues 1 to 56 are basic region; that stretch reads MSRHEKTKSTGGGLLDSLFGRPSKSKGGTISSGTLAHGGRPVSADNYVVPGVEDFE. Positions 25–34 are enriched in low complexity; that stretch reads SKGGTISSGT. The region spanning 59–431 is the GBD/FH3 domain; it reads IQQLSVAELD…QIVFHKGYCD (373 aa). Residues 455 to 496 are a coiled coil; that stretch reads KAKESKRSEEYEKKIEQLESAKQEAEAKAAHLEEKVKLMEAN. Disordered stretches follow at residues 499–589, 994–1021, and 1039–1072; these read AAPS…MMMG, RLQE…DMDA, and GSAF…RTRV. Over residues 512 to 572 the composition is skewed to pro residues; the sequence is PMPPPPPGGG…MGGPPPPPMP (61 aa). Residues 512-596 form the FH1 domain; it reads PMPPPPPGGG…MMGPMVPVLP (85 aa). One can recognise an FH2 domain in the interval 601 to 1001; it reads PKKKWDVKNP…KRRLQEAREQ (401 aa). Basic and acidic residues predominate over residues 994-1010; it reads RLQEAREQSAREQQERQ. The region spanning 1022–1054 is the DAD domain; it reads PQTQEGVMDSLLEALQTGSAFGQRNRQARRQRP.

This sequence belongs to the formin homology family. Diaphanous subfamily. As to quaternary structure, may interact (via CBD/FH3 domain) with Rho1.

The protein localises to the cytoplasm. It is found in the cytoskeleton. It localises to the cleavage furrow. Its subcellular location is the apical cell membrane. Its function is as follows. Required for cytokinesis in both mitosis and meiosis. Has a role in actin cytoskeleton organization and is essential for many, if not all, actin-mediated events involving membrane invagination. May serve as a mediator between signaling molecules and actin organizers at specific phases of the cell cycle. Possible component of the contractile ring or may control its function. The polypeptide is Protein diaphanous (dia) (Drosophila melanogaster (Fruit fly)).